Here is a 621-residue protein sequence, read N- to C-terminus: Ubiquitin-like-specific protease 1 (621 aa).

An N-acetylserine modification is found at S2. 2 positions are modified to phosphoserine: S21 and S25. 2 disordered regions span residues 116-150 (FDGS…ENYS) and 169-196 (RRRI…SNCD). Residues 124–141 (SGNSDVESRSSGSRSSDV) are compositionally biased toward low complexity. Position 179 is a phosphothreonine (T179). Over residues 179 to 196 (TPSTSPISSLASQKSNCD) the composition is skewed to polar residues. S264 carries the phosphoserine modification. Residues 432-621 (NIEITVRDFK…AHLILTDALK (190 aa)) form a protease region. Active-site residues include H514, D531, and C580.

The protein belongs to the peptidase C48 family.

It carries out the reaction Hydrolysis of the alpha-linked peptide bond in the sequence Gly-Gly-|-Ala-Thr-Tyr at the C-terminal end of the small ubiquitin-like modifier (SUMO) propeptide, Smt3, leading to the mature form of the protein. A second reaction involves the cleavage of an epsilon-linked peptide bond between the C-terminal glycine of the mature SUMO and the lysine epsilon-amino group of the target protein.. Functionally, protease that catalyzes two essential functions in the SUMO pathway: processing of full-length SMT3 to its mature form and deconjugation of SMT3 from targeted proteins. Has an essential role in the G2/M phase of the cell cycle. In Saccharomyces cerevisiae (strain ATCC 204508 / S288c) (Baker's yeast), this protein is Ubiquitin-like-specific protease 1 (ULP1).